A 345-amino-acid chain; its full sequence is rRNA 2'-O-methyltransferase fibrillarin (345 aa).

The interval 1–114 is disordered; it reads MGKPGFSPRG…GFKGGKTVTI (114 aa). Residues 8–108 are compositionally biased toward gly residues; it reads PRGGGGGGGG…RGGGAGGFKG (101 aa). Asymmetric dimethylarginine occurs at positions 9, 23, 25, 41, 43, 49, 52, 59, 64, 72, 78, 84, 89, 94, and 99. Residues 198–199, 217–218, 242–243, and 262–265 each bind S-adenosyl-L-methionine; these read TT, EF, DA, and DVAQ.

The protein belongs to the methyltransferase superfamily. Fibrillarin family. Component of box C/D small nucleolar ribonucleoprotein (snoRNP) particles. It is associated with the U3, U8 and U13 small nuclear RNAs. Post-translationally, by homology to other fibrillarins, some or all of the N-terminal domain arginines are modified to asymmetric dimethylarginine (DMA).

The protein resides in the nucleus. Its subcellular location is the nucleolus. It carries out the reaction L-glutaminyl-[histone H2A] + S-adenosyl-L-methionine = N(5)-methyl-L-glutaminyl-[histone H2A] + S-adenosyl-L-homocysteine + H(+). In terms of biological role, S-adenosyl-L-methionine-dependent methyltransferase that has the ability to methylate both RNAs and proteins. Involved in pre-rRNA processing. Utilizes the methyl donor S-adenosyl-L-methionine to catalyze the site-specific 2'-hydroxyl methylation of ribose moieties in pre-ribosomal RNA. Site specificity is provided by a guide RNA that base pairs with the substrate. Methylation occurs at a characteristic distance from the sequence involved in base pairing with the guide RNA. Also acts as a protein methyltransferase by mediating methylation of 'Gln-105' of histone H2A (H2AQ105me), a modification that impairs binding of the FACT complex and is specifically present at 35S ribosomal DNA locus. The protein is rRNA 2'-O-methyltransferase fibrillarin of Drosophila erecta (Fruit fly).